A 2315-amino-acid polypeptide reads, in one-letter code: Receptor-type tyrosine-protein phosphatase zeta (2315 aa).

Positions 1–24 (MRILKRFLACIQLLCVCRLDWANG) are cleaved as a signal peptide. At 25-1636 (YYRQQRKLVE…LAEGLESEKK (1612 aa)) the chain is on the extracellular side. The 265-residue stretch at 36-300 (IGWSYTGALN…KFSRQVFSSY (265 aa)) folds into the Alpha-carbonic anhydrase domain. 2 cysteine pairs are disulfide-bonded: Cys56–Cys240 and Cys133–Cys264. N-linked (GlcNAc...) asparagine glycosylation is found at Asn105, Asn134, Asn223, Asn232, Asn324, and Asn381. The Fibronectin type-III domain occupies 314 to 413 (EPENVQADPE…LIVDMPTDNP (100 aa)). Disordered regions lie at residues 442 to 462 (IVNP…PQIS) and 477 to 507 (AKTN…SQPV). The segment covering 496–507 (PNTSLNSTSQPV) has biased composition (polar residues). N-linked (GlcNAc...) asparagine glycosylation is found at Asn497, Asn501, and Asn552. Ser587 carries an O-linked (Xyl...) (chondroitin sulfate) serine glycan. Asn602 and Asn629 each carry an N-linked (GlcNAc...) asparagine glycan. Residues 628–650 (RNASEDSTSSGSEESLKDPSMEG) are disordered. Phosphoserine; alternate is present on Ser637. An O-linked (Xyl...) (chondroitin sulfate) serine; alternate glycan is attached at Ser637. Ser639 is subject to Phosphoserine. Asn677 carries an N-linked (GlcNAc...) asparagine glycan. A glycan (O-linked (Xyl...) (chondroitin sulfate) serine) is linked at Ser997. Residues Asn1017, Asn1050, Asn1082, and Asn1122 are each glycosylated (N-linked (GlcNAc...) asparagine). Positions 1123–1138 (FSVQPTHTVSQASGDT) are enriched in polar residues. Disordered regions lie at residues 1123–1160 (FSVQ…SSEM), 1397–1523 (KATS…EEND), 1543–1572 (LTSD…SFAD), and 1584–1621 (AGDS…NSSH). Residues 1145 to 1159 (SANSEPASSDPASSE) are compositionally biased toward low complexity. Acidic residues predominate over residues 1417 to 1432 (EDGDTDDDGDDDDDDR). The span at 1450–1465 (ESQEKVMNDSDTHENS) shows a compositional bias: basic and acidic residues. Asn1457 carries an N-linked (GlcNAc...) asparagine glycan. 2 stretches are compositionally biased toward polar residues: residues 1466–1479 (LMDQ…SLSE) and 1487–1513 (VTSV…GLSQ). O-linked (Xyl...) (chondroitin sulfate) serine glycans are attached at residues Ser1549 and Ser1551. Polar residues-rich tracts occupy residues 1554 to 1572 (GTSD…SFAD) and 1593 to 1606 (FPQS…SENS). An N-linked (GlcNAc...) asparagine glycan is attached at Asn1562. Asn1618 carries N-linked (GlcNAc...) asparagine glycosylation. A helical membrane pass occupies residues 1637-1662 (AVIPLVIVSALTFICLVVLVGILIYW). At 1663–2315 (RKCFQTAHFY…NIAESLESLV (653 aa)) the chain is on the cytoplasmic side. Residues Thr1684 and Thr1687 each carry the phosphothreonine modification. 2 Tyrosine-protein phosphatase domains span residues 1717–1992 (FTEE…LVEA) and 2023–2282 (LEKQ…ILSL). Substrate-binding positions include Asp1901, 1933-1939 (CSAGVGR), and Gln1977. The Phosphocysteine intermediate role is filled by Cys1933. Position 2055 is a phosphoserine (Ser2055).

The protein belongs to the protein-tyrosine phosphatase family. Receptor class 5 subfamily. In terms of assembly, the carbonic-anhydrase like domain interacts with CNTN1 (contactin). Interacts with PTN. Interaction with PTN promotes formation of homooligomers; oligomerization impairs phosphatase activity. Interacts (via chondroitin sulfate chains) with MDK (via C-terminal); this interaction is inhibited by PTN; this interaction promotes neuronal migration. As to expression, specifically expressed in the central nervous system, where it is localized in the Purkinje cell layer of the cerebellum, the dentate gyrus, and the subependymal layer of the anterior horn of the lateral ventricle. Developmentally regulated in the brain.

It localises to the cell membrane. It is found in the secreted. It catalyses the reaction O-phospho-L-tyrosyl-[protein] + H2O = L-tyrosyl-[protein] + phosphate. Functionally, protein tyrosine phosphatase that negatively regulates oligodendrocyte precursor proliferation in the embryonic spinal cord. Required for normal differentiation of the precursor cells into mature, fully myelinating oligodendrocytes. May play a role in protecting oligondendrocytes against apoptosis. May play a role in the establishment of contextual memory, probably via the dephosphorylation of proteins that are part of important signaling cascades. The protein is Receptor-type tyrosine-protein phosphatase zeta (PTPRZ1) of Homo sapiens (Human).